Consider the following 251-residue polypeptide: Plant UBX domain-containing protein 1 (251 aa).

M1 bears the N-acetylmethionine mark. Residues 104 to 180 (SKLTKAVIRV…GFVPGAIVYF (77 aa)) enclose the UBX domain. Residues 212–251 (AVEPVESSSEPATVDSSAVPVEHERKSTEKKTTKPKWFKM) form a disordered region. The segment covering 217 to 227 (ESSSEPATVDS) has biased composition (polar residues). Basic and acidic residues predominate over residues 232-243 (VEHERKSTEKKT).

Interacts with CDC48A (non-hexameric) via its UBX-containing C-terminal domain.

The protein resides in the cytoplasm. Regulates CDC48A by inhibiting its ATPase activity and by promoting the disassembly of the active hexamer. The chain is Plant UBX domain-containing protein 1 from Arabidopsis thaliana (Mouse-ear cress).